Reading from the N-terminus, the 846-residue chain is SLIT and NTRK-like protein 2 (846 aa).

The first 21 residues, 1 to 21, serve as a signal peptide directing secretion; it reads MLSGVWFLSVLTVAGILQTES. Residues 22-622 are Extracellular-facing; that stretch reads RKTAKDICKI…LHTEVPLSVL (601 aa). Disulfide bonds link Cys-29–Cys-35 and Cys-33–Cys-46. LRR repeat units follow at residues 63–84, 87–108, 111–132, 135–156, 159–180, and 182–203; these read RIYQ…EFVN, NAVT…AFSG, TLKR…TFLG, SLEY…AFSK, KLKV…VFRF, and LLTH…GVLE. Asn-84 carries an N-linked (GlcNAc...) asparagine glycan. A required for interaction with PTPRD region spans residues 167-215; the sequence is DNLLLSLPSNVFRFVLLTHLDLRGNRLKVMPFAGVLEHIGGIMEIQLEE. The region spanning 216–265 is the LRRCT 1 domain; that stretch reads NPWNCTCDLLPLKAWLDTITVFVGEIVCETPFRLHGKDVTQLTRQDLCPR. Asn-219 carries N-linked (GlcNAc...) asparagine glycosylation. 2 disulfides stabilise this stretch: Cys-220/Cys-243 and Cys-222/Cys-263. The tract at residues 261–322 is disordered; that stretch reads DLCPRKSASG…TPRVTVSKDR (62 aa). 2 stretches are compositionally biased toward low complexity: residues 267–276 and 285–300; these read SASGDSSQRS and RLTP…TRAP. Positions 332–374 constitute an LRRNT domain; it reads QTKSPVALTCPSSCVCTSQSSDNGLNVNCQERKFTNISDLQPK. 6 LRR repeats span residues 377 to 398, 401 to 422, 425 to 446, 449 to 470, 473 to 494, and 496 to 517; these read SPKK…DLLE, SLDL…AFTN, SLRR…MFDG, SLQY…TFDA, NLQL…IFGG, and ALTR…GVLD. Asn-422 is a glycosylation site (N-linked (GlcNAc...) asparagine). An LRRCT 2 domain is found at 530–581; the sequence is NPWDCTCDIMGLKDWTEHANSPVIINEVTCESPAKHAGEILKFLGREAICPE. Residues 623-643 traverse the membrane as a helical segment; sequence ILGLLVVFILSVCFGAGLFVF. At 644-846 the chain is on the cytoplasmic side; it reads VLKRRKGVPN…LEKQTAISQL (203 aa). The residue at position 757 (Tyr-757) is a Phosphotyrosine.

This sequence belongs to the SLITRK family. In terms of assembly, interacts with PTPRD; this interaction is PTPRD splicing-dependent and may induce pre-synaptic differentiation. Interacts with NTRK2. As to expression, in the adult, significant expression is detected only in the brain. Broadly expressed in embryonic brain with highest expression in ventricular layer, subventricular zone, cortical plate, pyramidal layer of hippocampus, subicular neuroepithelium, thalamus, hypothalamus and spinal cord.

The protein resides in the membrane. It localises to the cell membrane. It is found in the cell projection. Its subcellular location is the dendrite. It is involved in synaptogenesis. Promotes excitatory synapse differentiation. Suppresses neurite outgrowth. Involved in the negative regulation of NTRK2. This Mus musculus (Mouse) protein is SLIT and NTRK-like protein 2 (Slitrk2).